A 201-amino-acid chain; its full sequence is Probable nicotinate-nucleotide adenylyltransferase (201 aa).

This sequence belongs to the NadD family.

The catalysed reaction is nicotinate beta-D-ribonucleotide + ATP + H(+) = deamido-NAD(+) + diphosphate. The protein operates within cofactor biosynthesis; NAD(+) biosynthesis; deamido-NAD(+) from nicotinate D-ribonucleotide: step 1/1. Functionally, catalyzes the reversible adenylation of nicotinate mononucleotide (NaMN) to nicotinic acid adenine dinucleotide (NaAD). This Neisseria meningitidis serogroup C / serotype 2a (strain ATCC 700532 / DSM 15464 / FAM18) protein is Probable nicotinate-nucleotide adenylyltransferase.